Consider the following 142-residue polypeptide: Peptide methionine sulfoxide reductase MsrB (142 aa).

Residues 2–125 form the MsrB domain; the sequence is LKKDKSELTD…NSAAIQFIPY (124 aa). C114 functions as the Nucleophile in the catalytic mechanism.

This sequence belongs to the MsrB Met sulfoxide reductase family.

The catalysed reaction is L-methionyl-[protein] + [thioredoxin]-disulfide + H2O = L-methionyl-(R)-S-oxide-[protein] + [thioredoxin]-dithiol. The polypeptide is Peptide methionine sulfoxide reductase MsrB (Staphylococcus aureus (strain USA300)).